The chain runs to 165 residues: E3 ubiquitin-protein ligase RNF181 (165 aa).

The RING-type; atypical zinc finger occupies 88–129 (CPVCLLEFEAEETVIEMPCHHLFHSNCILPWLSKTNSCPLCR). The interval 136–165 (DDSYEEHKKDKARRQQQQHRLENLHGAMYT) is disordered. Threonine 165 is modified (phosphothreonine).

Belongs to the RNF181 family. As to quaternary structure, directly interacts with ITGA2B and, as a result, with integrin ITGA2B/ITGB3. There is no evidence that integrin ITGA2B/ITGB3 is an endogenous substrate for RNF181-directed ubiquitination. Post-translationally, auto-ubiquitinated as part of the enzymatic reaction.

It carries out the reaction S-ubiquitinyl-[E2 ubiquitin-conjugating enzyme]-L-cysteine + [acceptor protein]-L-lysine = [E2 ubiquitin-conjugating enzyme]-L-cysteine + N(6)-ubiquitinyl-[acceptor protein]-L-lysine.. Its pathway is protein modification; protein ubiquitination. E3 ubiquitin-protein ligase which accepts ubiquitin from an E2 ubiquitin-conjugating enzyme in the form of a thioester and then directly transfers the ubiquitin to targeted substrates. Catalyzes monoubiquitination of 26S proteasome subunit PSMC2/RPT1. The chain is E3 ubiquitin-protein ligase RNF181 from Mus musculus (Mouse).